The sequence spans 242 residues: Uridylate kinase (242 aa).

11 to 14 (KLSG) provides a ligand contact to ATP. The interval 19–24 (GNMGYG) is involved in allosteric activation by GTP. Residue Gly-53 participates in UMP binding. ATP-binding residues include Gly-54 and Arg-58. UMP contacts are provided by residues Asp-73 and 134-141 (SGNPFFTT). Residues Thr-161, Tyr-167, and Asp-170 each coordinate ATP.

Belongs to the UMP kinase family. In terms of assembly, homohexamer.

It is found in the cytoplasm. The catalysed reaction is UMP + ATP = UDP + ADP. It functions in the pathway pyrimidine metabolism; CTP biosynthesis via de novo pathway; UDP from UMP (UMPK route): step 1/1. Allosterically activated by GTP. Inhibited by UTP. Catalyzes the reversible phosphorylation of UMP to UDP. This Trichormus variabilis (strain ATCC 29413 / PCC 7937) (Anabaena variabilis) protein is Uridylate kinase.